We begin with the raw amino-acid sequence, 263 residues long: Ribosomal RNA large subunit methyltransferase E (263 aa).

Residues 1–34 form a disordered region; it reads MSSAEGPKSGGGSKGSKSEASSRVRGSAPTGSRD. G102, W104, D126, D142, and D166 together coordinate S-adenosyl-L-methionine. The Proton acceptor role is filled by K206.

It belongs to the class I-like SAM-binding methyltransferase superfamily. RNA methyltransferase RlmE family.

It localises to the cytoplasm. The enzyme catalyses uridine(2552) in 23S rRNA + S-adenosyl-L-methionine = 2'-O-methyluridine(2552) in 23S rRNA + S-adenosyl-L-homocysteine + H(+). Functionally, specifically methylates the uridine in position 2552 of 23S rRNA at the 2'-O position of the ribose in the fully assembled 50S ribosomal subunit. The chain is Ribosomal RNA large subunit methyltransferase E from Rhodospirillum rubrum (strain ATCC 11170 / ATH 1.1.1 / DSM 467 / LMG 4362 / NCIMB 8255 / S1).